Consider the following 160-residue polypeptide: Heme transporter hrg-5 (160 aa).

The chain crosses the membrane as a helical span at residues 21-41 (IALTILDILIGFSNILSYAIQ). A glycan (N-linked (GlcNAc...) asparagine) is linked at Asn-44. A run of 3 helical transmembrane segments spans residues 47–67 (ALTLTAMVTLVACHTLQMFLA), 89–109 (ITLGFLALGCFVVCFIIAGVT), and 123–142 (FTGLWATAITKYTWQNALLA). Asn-144 carries N-linked (GlcNAc...) asparagine glycosylation.

Belongs to the HRG family.

The protein resides in the membrane. In terms of biological role, heme transporter. The sequence is that of Heme transporter hrg-5 (hrg-5) from Caenorhabditis elegans.